The sequence spans 117 residues: uncharacterized protein (117 aa).

This is an uncharacterized protein from Methanocaldococcus jannaschii (strain ATCC 43067 / DSM 2661 / JAL-1 / JCM 10045 / NBRC 100440) (Methanococcus jannaschii).